A 450-amino-acid chain; its full sequence is Asparagine--tRNA ligase (450 aa).

It belongs to the class-II aminoacyl-tRNA synthetase family. In terms of assembly, homodimer.

It localises to the cytoplasm. The catalysed reaction is tRNA(Asn) + L-asparagine + ATP = L-asparaginyl-tRNA(Asn) + AMP + diphosphate + H(+). This Metamycoplasma arthritidis (strain 158L3-1) (Mycoplasma arthritidis) protein is Asparagine--tRNA ligase.